A 489-amino-acid chain; its full sequence is Probable cytochrome P450 CYP44 (489 aa).

A disordered region spans residues 12–31; the sequence is VEKCPYSPTSSPNTPPRTFS. A compositionally biased stretch (low complexity) spans 16–29; sequence PYSPTSSPNTPPRT. Cys-438 contacts heme.

This sequence belongs to the cytochrome P450 family. Heme serves as cofactor.

In terms of biological role, cytochromes P450 are a group of heme-thiolate monooxygenases. They oxidize a variety of structurally unrelated compounds, including steroids, fatty acids, and xenobiotics. This is Probable cytochrome P450 CYP44 (cyp-44A1) from Caenorhabditis elegans.